A 358-amino-acid polypeptide reads, in one-letter code: L-tryptophan methyltransferase trpM (358 aa).

It belongs to the methyltransferase superfamily.

It carries out the reaction L-tryptophan + S-adenosyl-L-methionine = N(alpha)-methyl-L-tryptophan + S-adenosyl-L-homocysteine + H(+). It catalyses the reaction N(alpha)-methyl-L-tryptophan + S-adenosyl-L-methionine = N(alpha),N(alpha)-dimethyl-L-tryptophan + S-adenosyl-L-homocysteine + H(+). The catalysed reaction is N(alpha),N(alpha)-dimethyl-L-tryptophan + S-adenosyl-L-methionine = N(alpha),N(alpha),N(alpha)-trimethyl-L-tryptophan + S-adenosyl-L-homocysteine + H(+). Its function is as follows. Methyltransferase that catalyzes iterative L-tryptophan N-methylations to produce L-abrine (N-alpha-methyl-L-tryptophan) and N,N-alpha-dimethyl-L-tryptophan. Also catalyzes a third methylation to yield L-hypaphorine (N,N,N-alpha-trimethyl-L-tryptopan), an agonist of the phytohormone indole-3-acetic acid. Can also N-methylate the non-native amino acid substrate 4-hydroxytryptophan, but the ability to incorporate trpM into a functional psilocybin biosynthesis pathway is indeed thwarted by the inability of the L-tryptophan decarboxylase psiD to use N,N-dimethyl-4-hydroxytryptophan as substrate. The protein is L-tryptophan methyltransferase trpM of Psilocybe serbica.